Consider the following 189-residue polypeptide: Small ribosomal subunit protein uS5 (189 aa).

The S5 DRBM domain occupies 22–85 (FVDKLVAINR…EAAKRELIFV (64 aa)).

This sequence belongs to the universal ribosomal protein uS5 family. Part of the 30S ribosomal subunit. Contacts proteins S4 and S8.

Functionally, with S4 and S12 plays an important role in translational accuracy. In terms of biological role, located at the back of the 30S subunit body where it stabilizes the conformation of the head with respect to the body. In Rhizobium etli (strain CIAT 652), this protein is Small ribosomal subunit protein uS5.